The sequence spans 748 residues: Cysteine--tRNA ligase, cytoplasmic (748 aa).

The tract at residues 1–25 (MAGSSGQQGKGRRVQPQWSPPAGTQ) is disordered. A2 is subject to N-acetylalanine. S19 carries the phosphoserine modification. Residue C55 coordinates Zn(2+). G56 is a binding site for L-cysteine. The short motif at 57-67 (PTVYDASHMGH) is the 'HIGH' region element. An L-cysteine-binding site is contributed by T96. The short motif at 101 to 104 (KIIK) is the 'KIIK' region element. 2 positions are modified to phosphoserine: S305 and S307. 3 residues coordinate Zn(2+): C348, H373, and E377. Residue H373 coordinates L-cysteine. The 'KMSKS' region motif lies at 406–410 (KMSKS). K409 lines the ATP pocket. Basic and acidic residues-rich tracts occupy residues 654–679 (KRQV…EAAK) and 700–717 (KFDE…KELS). Disordered stretches follow at residues 654–686 (KRQV…MKIP) and 700–721 (KFDE…KGQA). S746 bears the Phosphoserine mark.

In terms of assembly, homodimer. It depends on Zn(2+) as a cofactor.

It is found in the cytoplasm. It carries out the reaction tRNA(Cys) + L-cysteine + ATP = L-cysteinyl-tRNA(Cys) + AMP + diphosphate. In terms of biological role, catalyzes the ATP-dependent ligation of cysteine to tRNA(Cys). The protein is Cysteine--tRNA ligase, cytoplasmic (CARS1) of Macaca fascicularis (Crab-eating macaque).